Consider the following 153-residue polypeptide: uncharacterized protein (153 aa).

A signal peptide spans 1–22 (MKMLKKGTAVLFVMIMAVMLVA). Cys23 carries the N-palmitoyl cysteine lipid modification. A lipid anchor (S-diacylglycerol cysteine) is attached at Cys23. A disordered region spans residues 117–153 (DMNKIPGMSSNGDTSKGISMEESAKMLESQGYKEVSK). Residues 124-133 (MSSNGDTSKG) are compositionally biased toward polar residues.

The protein to E.coli YehR.

It localises to the cell membrane. This is an uncharacterized protein from Listeria monocytogenes serovar 1/2a (strain ATCC BAA-679 / EGD-e).